Here is a 241-residue protein sequence, read N- to C-terminus: CD99 antigen-like protein 2 (241 aa).

An N-terminal signal peptide occupies residues 1-23; the sequence is MAKWGSPFVFALACLALSWRVYG. At 24–173 the chain is on the extracellular side; it reads DDFDLYDALG…TGFGSQAETG (150 aa). A disordered region spans residues 30–168; that stretch reads DALGDPTEKP…NDGSDTGFGS (139 aa). Residues 143–154 show a composition bias toward gly residues; sequence GGGGGGGGGRAT. The helical transmembrane segment at 174–196 threads the bilayer; it reads TIAGIASALAMALIGAVSSYISY. Over 197-241 the chain is Cytoplasmic; the sequence is QQKKFCFSIQEGLNAEYVKGEHMEAVVSEEPQVKYSVVESQSAIP.

This sequence belongs to the CD99 family.

Its subcellular location is the cell membrane. It is found in the cell junction. May function as a homophilic adhesion molecule. The chain is CD99 antigen-like protein 2 (cd99l2) from Xenopus tropicalis (Western clawed frog).